Reading from the N-terminus, the 434-residue chain is Gamma-glutamyl phosphate reductase (434 aa).

This sequence belongs to the gamma-glutamyl phosphate reductase family.

The protein localises to the cytoplasm. The enzyme catalyses L-glutamate 5-semialdehyde + phosphate + NADP(+) = L-glutamyl 5-phosphate + NADPH + H(+). It functions in the pathway amino-acid biosynthesis; L-proline biosynthesis; L-glutamate 5-semialdehyde from L-glutamate: step 2/2. Catalyzes the NADPH-dependent reduction of L-glutamate 5-phosphate into L-glutamate 5-semialdehyde and phosphate. The product spontaneously undergoes cyclization to form 1-pyrroline-5-carboxylate. In Pelotomaculum thermopropionicum (strain DSM 13744 / JCM 10971 / SI), this protein is Gamma-glutamyl phosphate reductase.